The primary structure comprises 715 residues: Probable ubiquitin thioesterase DG1039 (715 aa).

Residues 86 to 302 (KSRNEIKRKA…NNQTDDKLDN (217 aa)) are a coiled coil. The span at 287-302 (NKKLENNNQTDDKLDN) shows a compositional bias: basic and acidic residues. Disordered stretches follow at residues 287-367 (NKKL…YNST), 398-450 (QYKQ…QQQY), and 502-527 (LAQS…SSEA). Residues 339 to 349 (TTAQLPLSITQ) are compositionally biased toward polar residues. Residues 398 to 409 (QYKQQQQQQPIQ) are compositionally biased toward low complexity. Composition is skewed to polar residues over residues 410 to 427 (SPTN…NNYN) and 502 to 525 (LAQS…IDSS). The MPN domain occupies 537 to 666 (IIVHGEVFQE…IFRLTDPPGL (130 aa)). Residues histidine 615, histidine 617, aspartate 628, histidine 630, cysteine 672, histidine 678, and histidine 680 each coordinate Zn(2+). The short motif at 615–628 (HTHPTQDCFLSAVD) is the JAMM motif element.

Belongs to the peptidase M67C family. Zn(2+) serves as cofactor.

May be a zinc metalloprotease that specifically cleaves ubiquitin chains. In Dictyostelium discoideum (Social amoeba), this protein is Probable ubiquitin thioesterase DG1039 (DG1039).